Consider the following 533-residue polypeptide: 1-aminocyclopropane-1-carboxylate synthase 5 (533 aa).

The residue at position 358 (K358) is an N6-(pyridoxal phosphate)lysine.

This sequence belongs to the class-I pyridoxal-phosphate-dependent aminotransferase family. Pyridoxal 5'-phosphate is required as a cofactor. As to expression, expressed in shoots and leaf blades. Expressed at low levels in leaf sheaths. Expressed in vasculature of roots and shoots.

The catalysed reaction is S-adenosyl-L-methionine = 1-aminocyclopropane-1-carboxylate + S-methyl-5'-thioadenosine + H(+). Its pathway is alkene biosynthesis; ethylene biosynthesis via S-adenosyl-L-methionine; ethylene from S-adenosyl-L-methionine: step 1/2. In terms of biological role, catalyzes the formation of 1-aminocyclopropane-1-carboxylate, a direct precursor of ethylene in higher plants. The protein is 1-aminocyclopropane-1-carboxylate synthase 5 of Oryza sativa subsp. japonica (Rice).